The following is a 222-amino-acid chain: Alpha-S2-casein (222 aa).

Positions M1 to A15 are cleaved as a signal peptide. Residues S23, S24, S25, S28, S46, S71, S72, S73, S76, S144, S146, S150, and S158 each carry the phosphoserine modification. A repeat spans S76 to R140. Positions S158 to L222 form a repeat.

The protein belongs to the alpha-casein family. In terms of tissue distribution, mammary gland specific. Secreted in milk.

It is found in the secreted. Functionally, important role in the capacity of milk to transport calcium phosphate. Its function is as follows. Casocidin-I inhibits the growth of E.coli and S.carnosus. The polypeptide is Alpha-S2-casein (CSN1S2) (Bos taurus (Bovine)).